A 1070-amino-acid polypeptide reads, in one-letter code: DNA-directed RNA polymerase subunit beta (1070 aa).

Belongs to the RNA polymerase beta chain family. In plastids the minimal PEP RNA polymerase catalytic core is composed of four subunits: alpha, beta, beta', and beta''. When a (nuclear-encoded) sigma factor is associated with the core the holoenzyme is formed, which can initiate transcription.

Its subcellular location is the plastid. It is found in the chloroplast. The catalysed reaction is RNA(n) + a ribonucleoside 5'-triphosphate = RNA(n+1) + diphosphate. DNA-dependent RNA polymerase catalyzes the transcription of DNA into RNA using the four ribonucleoside triphosphates as substrates. This Populus alba (White poplar) protein is DNA-directed RNA polymerase subunit beta.